Reading from the N-terminus, the 286-residue chain is ATP synthase gamma chain (286 aa).

The protein belongs to the ATPase gamma chain family. As to quaternary structure, F-type ATPases have 2 components, CF(1) - the catalytic core - and CF(0) - the membrane proton channel. CF(1) has five subunits: alpha(3), beta(3), gamma(1), delta(1), epsilon(1). CF(0) has three main subunits: a, b and c.

The protein resides in the cell membrane. Functionally, produces ATP from ADP in the presence of a proton gradient across the membrane. The gamma chain is believed to be important in regulating ATPase activity and the flow of protons through the CF(0) complex. This chain is ATP synthase gamma chain, found in Bacillus anthracis (strain A0248).